The sequence spans 226 residues: PKHD-type hydroxylase LHK_00496 (226 aa).

In terms of domain architecture, Fe2OG dioxygenase spans 78–178; sequence RFFPPLFNRY…RVASFMWIQS (101 aa). Fe cation contacts are provided by H96, D98, and H159. R169 contributes to the 2-oxoglutarate binding site.

Fe(2+) serves as cofactor. The cofactor is L-ascorbate.

The protein is PKHD-type hydroxylase LHK_00496 of Laribacter hongkongensis (strain HLHK9).